We begin with the raw amino-acid sequence, 619 residues long: Guanylate cyclase soluble subunit beta-1 (619 aa).

His105 serves as a coordination point for heme. The 134-residue stretch at Thr421–Glu554 folds into the Guanylate cyclase domain.

It belongs to the adenylyl cyclase class-4/guanylyl cyclase family. In terms of assembly, the active enzyme is formed by a heterodimer of an alpha and a beta subunit. Heterodimer with GUCY1A1. Can also form inactive homodimers in vitro. Heme is required as a cofactor. As to expression, detected in brain cortex and cerebellum (at protein level).

Its subcellular location is the cytoplasm. It catalyses the reaction GTP = 3',5'-cyclic GMP + diphosphate. With respect to regulation, activated by nitric oxide in the presence of magnesium or manganese ions. In terms of biological role, mediates responses to nitric oxide (NO) by catalyzing the biosynthesis of the signaling molecule cGMP. In Homo sapiens (Human), this protein is Guanylate cyclase soluble subunit beta-1.